Consider the following 357-residue polypeptide: Probable 3'(2'),5'-bisphosphate nucleotidase 3 (357 aa).

The Proton acceptor role is filled by D46. E71, D135, and I137 together coordinate Mg(2+). The Proton acceptor role is filled by T140. Adenosine 3',5'-bisphosphate is bound by residues T140, S256, K259, and R273. S256, K259, and R273 together coordinate AMP.

Belongs to the inositol monophosphatase superfamily. Requires Mg(2+) as cofactor.

The catalysed reaction is 3'-phosphoadenylyl sulfate + H2O = adenosine 5'-phosphosulfate + phosphate. It catalyses the reaction adenosine 3',5'-bisphosphate + H2O = AMP + phosphate. It carries out the reaction adenosine 2',5'-bisphosphate + H2O = AMP + phosphate. The enzyme catalyses 1D-myo-inositol 1,4-bisphosphate + H2O = 1D-myo-inositol 4-phosphate + phosphate. The catalysed reaction is 1D-myo-inositol 1,3,4-trisphosphate + H2O = 1D-myo-inositol 3,4-bisphosphate + phosphate. The protein operates within signal transduction; phosphatidylinositol signaling pathway. Its function is as follows. Phosphatase that converts adenosine 3'-phosphate 5'-phosphosulfate (PAPS) to adenosine 5'-phosphosulfate (APS) and 3'(2')-phosphoadenosine 5'-phosphate (PAP) to AMP. Is also able to hydrolyze inositol 1,4-bisphosphate and inositol 1,3,4-trisphosphate. The chain is Probable 3'(2'),5'-bisphosphate nucleotidase 3 (SAL3) from Arabidopsis thaliana (Mouse-ear cress).